Consider the following 376-residue polypeptide: S-adenosylmethionine synthase (376 aa).

His-14 contributes to the ATP binding site. Asp-16 is a binding site for Mg(2+). Position 42 (Glu-42) interacts with K(+). The L-methionine site is built by Glu-55 and Gln-98. Residues 98–108 are flexible loop; sequence QSPEIALGISS. ATP is bound by residues 158–160, 224–225, Asp-233, 239–240, Ala-256, and Lys-260; these read DGK, RF, and RK. Residue Asp-233 coordinates L-methionine. Lys-264 contacts L-methionine.

This sequence belongs to the AdoMet synthase family. As to quaternary structure, homotetramer; dimer of dimers. Mg(2+) serves as cofactor. It depends on K(+) as a cofactor.

It localises to the cytoplasm. It catalyses the reaction L-methionine + ATP + H2O = S-adenosyl-L-methionine + phosphate + diphosphate. It functions in the pathway amino-acid biosynthesis; S-adenosyl-L-methionine biosynthesis; S-adenosyl-L-methionine from L-methionine: step 1/1. Catalyzes the formation of S-adenosylmethionine (AdoMet) from methionine and ATP. The overall synthetic reaction is composed of two sequential steps, AdoMet formation and the subsequent tripolyphosphate hydrolysis which occurs prior to release of AdoMet from the enzyme. The protein is S-adenosylmethionine synthase of Aquifex aeolicus (strain VF5).